A 366-amino-acid chain; its full sequence is D-alanine--D-alanine ligase (366 aa).

An ATP-grasp domain is found at 150 to 353; sequence KRVLRDAGVP…YPALVDRLIV (204 aa). 180-235 is a binding site for ATP; it reads IGQLGLPLFIKPASQGSSVGVSKVTDRAGFAAALALAFRYDAKVLVEQGISGREIE. D307, E320, and N322 together coordinate Mg(2+).

The protein belongs to the D-alanine--D-alanine ligase family. It depends on Mg(2+) as a cofactor. Requires Mn(2+) as cofactor.

The protein resides in the cytoplasm. It carries out the reaction 2 D-alanine + ATP = D-alanyl-D-alanine + ADP + phosphate + H(+). It participates in cell wall biogenesis; peptidoglycan biosynthesis. Cell wall formation. The protein is D-alanine--D-alanine ligase of Sodalis glossinidius (strain morsitans).